The primary structure comprises 352 residues: Biotin synthase (352 aa).

One can recognise a Radical SAM core domain in the interval 44-262; it reads NRVQVSTLLS…LAVARILMPK (219 aa). Residues cysteine 59, cysteine 63, and cysteine 66 each contribute to the [4Fe-4S] cluster site. The [2Fe-2S] cluster site is built by cysteine 103, cysteine 134, cysteine 194, and arginine 266.

Belongs to the radical SAM superfamily. Biotin synthase family. Homodimer. [4Fe-4S] cluster is required as a cofactor. Requires [2Fe-2S] cluster as cofactor.

It carries out the reaction (4R,5S)-dethiobiotin + (sulfur carrier)-SH + 2 reduced [2Fe-2S]-[ferredoxin] + 2 S-adenosyl-L-methionine = (sulfur carrier)-H + biotin + 2 5'-deoxyadenosine + 2 L-methionine + 2 oxidized [2Fe-2S]-[ferredoxin]. It participates in cofactor biosynthesis; biotin biosynthesis; biotin from 7,8-diaminononanoate: step 2/2. In terms of biological role, catalyzes the conversion of dethiobiotin (DTB) to biotin by the insertion of a sulfur atom into dethiobiotin via a radical-based mechanism. This is Biotin synthase from Pseudomonas syringae pv. syringae (strain B728a).